Here is a 267-residue protein sequence, read N- to C-terminus: Tryptophan synthase alpha chain (267 aa).

Catalysis depends on proton acceptor residues Glu49 and Asp60.

It belongs to the TrpA family. As to quaternary structure, tetramer of two alpha and two beta chains.

The catalysed reaction is (1S,2R)-1-C-(indol-3-yl)glycerol 3-phosphate + L-serine = D-glyceraldehyde 3-phosphate + L-tryptophan + H2O. It participates in amino-acid biosynthesis; L-tryptophan biosynthesis; L-tryptophan from chorismate: step 5/5. In terms of biological role, the alpha subunit is responsible for the aldol cleavage of indoleglycerol phosphate to indole and glyceraldehyde 3-phosphate. The polypeptide is Tryptophan synthase alpha chain (Methylococcus capsulatus (strain ATCC 33009 / NCIMB 11132 / Bath)).